Reading from the N-terminus, the 334-residue chain is Small ribosomal subunit protein uS2 (334 aa).

It belongs to the universal ribosomal protein uS2 family.

In Xanthobacter autotrophicus (strain ATCC BAA-1158 / Py2), this protein is Small ribosomal subunit protein uS2.